We begin with the raw amino-acid sequence, 85 residues long: Insecticidal toxin Vn1 (85 aa).

The N-terminal stretch at 1–23 (MFLYRLICLFILICIITVDISTS) is a signal peptide. C71 and C84 are oxidised to a cystine.

As to expression, highly expressed in the venom apparatus, and weakly expressed in residual body.

It localises to the secreted. Its function is as follows. Endoparasitoid venom toxin that exhibits insecticidal activity against Tenebrio molitor pupae. Impacts genes related to immune response, environmental information processing, metabolism, and response to external stimuli in T.molitor, suggesting its involvement in the intricate parasitoid wasp-host interaction. The sequence is that of Insecticidal toxin Vn1 from Aphidius gifuensis (Parasitoid wasp).